We begin with the raw amino-acid sequence, 734 residues long: Photosystem I P700 chlorophyll a apoprotein A2 (734 aa).

The next 8 membrane-spanning stretches (helical) occupy residues 46 to 69 (IFASHFGHLAIIFLWTSGNLFHVA), 135 to 158 (LYSGALFLLVLSALLLFGGWLHLQ), 175 to 199 (LNHHLSGLFGVSSLARTGHLVHVAI), 273 to 291 (MAHHHLAIAVVFIVAGHMY), 330 to 353 (LHIQLGLALASLGVITSLVAQHMY), 369 to 395 (ASLYTHHQYIAGFLMVGAFAHGAIFFV), 417 to 439 (AIISHLSWVTLFLGFHTLGLYVH), and 517 to 535 (FLVHHAIALGLHTTTLILV). Residues Cys559 and Cys568 each coordinate [4Fe-4S] cluster. 2 helical membrane passes run 575–596 (AFYLAVFWMLNTIGWVTFYWHW) and 643–665 (LSVWSWMFLFGHLVWATGFMFLI). Chlorophyll a contacts are provided by His654, Met662, and Tyr670. Phylloquinone is bound at residue Trp671. A helical membrane pass occupies residues 707–727 (LVGLAHFSVGYVLTYAAFVLA).

The protein belongs to the PsaA/PsaB family. In terms of assembly, the PsaA/B heterodimer binds the P700 chlorophyll special pair and subsequent electron acceptors. PSI consists of a core antenna complex that captures photons, and an electron transfer chain that converts photonic excitation into a charge separation. The eukaryotic PSI reaction center is composed of at least 11 subunits. P700 is a chlorophyll a/chlorophyll a' dimer, A0 is one or more chlorophyll a, A1 is one or both phylloquinones and FX is a shared 4Fe-4S iron-sulfur center. is required as a cofactor.

It is found in the plastid. The protein localises to the chloroplast thylakoid membrane. The enzyme catalyses reduced [plastocyanin] + hnu + oxidized [2Fe-2S]-[ferredoxin] = oxidized [plastocyanin] + reduced [2Fe-2S]-[ferredoxin]. Its function is as follows. PsaA and PsaB bind P700, the primary electron donor of photosystem I (PSI), as well as the electron acceptors A0, A1 and FX. PSI is a plastocyanin/cytochrome c6-ferredoxin oxidoreductase, converting photonic excitation into a charge separation, which transfers an electron from the donor P700 chlorophyll pair to the spectroscopically characterized acceptors A0, A1, FX, FA and FB in turn. Oxidized P700 is reduced on the lumenal side of the thylakoid membrane by plastocyanin or cytochrome c6. In Pyropia yezoensis (Susabi-nori), this protein is Photosystem I P700 chlorophyll a apoprotein A2.